Reading from the N-terminus, the 166-residue chain is ATP synthase subunit b (166 aa).

The helical transmembrane segment at F8–V28 threads the bilayer.

This sequence belongs to the ATPase B chain family. As to quaternary structure, F-type ATPases have 2 components, F(1) - the catalytic core - and F(0) - the membrane proton channel. F(1) has five subunits: alpha(3), beta(3), gamma(1), delta(1), epsilon(1). F(0) has three main subunits: a(1), b(2) and c(10-14). The alpha and beta chains form an alternating ring which encloses part of the gamma chain. F(1) is attached to F(0) by a central stalk formed by the gamma and epsilon chains, while a peripheral stalk is formed by the delta and b chains.

The protein resides in the cell inner membrane. Functionally, f(1)F(0) ATP synthase produces ATP from ADP in the presence of a proton or sodium gradient. F-type ATPases consist of two structural domains, F(1) containing the extramembraneous catalytic core and F(0) containing the membrane proton channel, linked together by a central stalk and a peripheral stalk. During catalysis, ATP synthesis in the catalytic domain of F(1) is coupled via a rotary mechanism of the central stalk subunits to proton translocation. Component of the F(0) channel, it forms part of the peripheral stalk, linking F(1) to F(0). The polypeptide is ATP synthase subunit b (Flavobacterium johnsoniae (strain ATCC 17061 / DSM 2064 / JCM 8514 / BCRC 14874 / CCUG 350202 / NBRC 14942 / NCIMB 11054 / UW101) (Cytophaga johnsonae)).